Reading from the N-terminus, the 842-residue chain is Protein translocase subunit SecA 1 (842 aa).

Residues Gln85, 103-107 (GEGKT), and Asp493 contribute to the ATP site. Zn(2+) contacts are provided by Cys824, Cys826, Cys835, and His836.

It belongs to the SecA family. Monomer and homodimer. Part of the essential Sec protein translocation apparatus which comprises SecA, SecYEG and auxiliary proteins SecDF. Other proteins may also be involved. Requires Zn(2+) as cofactor.

The protein resides in the cell membrane. Its subcellular location is the cytoplasm. The enzyme catalyses ATP + H2O + cellular proteinSide 1 = ADP + phosphate + cellular proteinSide 2.. In terms of biological role, part of the Sec protein translocase complex. Interacts with the SecYEG preprotein conducting channel. Has a central role in coupling the hydrolysis of ATP to the transfer of proteins into and across the cell membrane, serving as an ATP-driven molecular motor driving the stepwise translocation of polypeptide chains across the membrane. This Streptococcus agalactiae serotype Ia (strain ATCC 27591 / A909 / CDC SS700) protein is Protein translocase subunit SecA 1.